A 149-amino-acid polypeptide reads, in one-letter code: Calmodulin (149 aa).

Position 2 is an N-acetylalanine (Ala2). 4 EF-hand domains span residues 8-43 (EQIAEFKEAFSLFDKDGDGTITTKELGTVMRSLGQN), 44-79 (PTEAELQDMINEVDADGNGTIDFPEFLSLMARKMKD), 81-116 (DTEEELIEAFKVFDRDGNGFISAAELRHVMTNLGEK), and 117-149 (LTDEEVDEMIREADVDGDGQINYEEFVKMMMAK). Asp21, Asp23, Asp25, Thr27, Glu32, Asp57, Asp59, Asn61, Thr63, Glu68, Asp94, Asp96, Asn98, and Glu105 together coordinate Ca(2+). N6,N6,N6-trimethyllysine is present on Lys116. Ca(2+) contacts are provided by Asp130, Asp132, Asp134, Gln136, and Glu141.

The protein belongs to the calmodulin family.

Functionally, calmodulin mediates the control of a large number of enzymes, ion channels and other proteins by Ca(2+). Among the enzymes to be stimulated by the calmodulin-Ca(2+) complex are a number of protein kinases and phosphatases. The protein is Calmodulin of Karlodinium veneficum (Dinoflagellate).